The following is an 81-amino-acid chain: MAVKIRLKRMGQKKAPFYRVIVADSRSPRDGKFIAEIGTYDPTQEPSAFNVDEEAAKKWLADGAQPTETINRLFKKAGIVK.

Belongs to the bacterial ribosomal protein bS16 family.

The chain is Small ribosomal subunit protein bS16 from Lachnoclostridium phytofermentans (strain ATCC 700394 / DSM 18823 / ISDg) (Clostridium phytofermentans).